The sequence spans 997 residues: Glutamate [NMDA] receptor subunit 1 (997 aa).

The first 26 residues, 1–26 (MAVAGFVFCRPLFGLAIVLLVAPIDA), serve as a signal peptide directing secretion. Topologically, residues 27–573 (AQRHTASDNP…TLVSFLQPFS (547 aa)) are extracellular. Residues N258, N314, N345, N397, N454, N481, and N501 are each glycosylated (N-linked (GlcNAc...) asparagine). Residues 530–532 (PLT) and R537 contribute to the glycine site. A helical membrane pass occupies residues 574–594 (NTLWILVMVSVHVVALVLYLL). Over 595 to 651 (DRFSPFGRFKLSHSDSNEEKALNLSSAVWFAWGVLLNSGIGEGTPRSFSARVLGMVW) the chain is Cytoplasmic. Residues 652–672 (AGFAMIIVASYTANLAAFLVL) traverse the membrane as a helical segment. Topologically, residues 673–831 (ERPKTKLSGI…KTPNTLGLKN (159 aa)) are extracellular. N-linked (GlcNAc...) asparagine glycosylation is present at N693. Glycine-binding residues include S703 and D747. The helical transmembrane segment at 832 to 852 (MAGVFILVGVGIAGGVGLIII) threads the bilayer. At 853-997 (EVIYKKHQVK…YTSDVSHLVV (145 aa)) the chain is on the cytoplasmic side. The segment at 970-997 (LGKTRPQQSVLPPRYSPGYTSDVSHLVV) is disordered. Residues 987–997 (GYTSDVSHLVV) are compositionally biased toward polar residues.

The protein belongs to the glutamate-gated ion channel (TC 1.A.10.1) family. Forms a heteromeric NMDA channel with Nmdar2.

It localises to the cell membrane. The protein resides in the postsynaptic cell membrane. Its subcellular location is the postsynaptic density. In terms of biological role, NMDA receptor subtype of glutamate-gated ion channels with high calcium permeability and voltage-dependent sensitivity to magnesium. Mediated by glycine. This protein plays a key role in synaptic plasticity, synaptogenesis, excitotoxicity, memory acquisition and learning. It mediates neuronal functions in glutamate neurotransmission. Is involved in the cell surface targeting of NMDA receptors. Plays a role in associative learning and in long-term memory consolidation. This chain is Glutamate [NMDA] receptor subunit 1, found in Drosophila sechellia (Fruit fly).